Here is a 219-residue protein sequence, read N- to C-terminus: 2-hydroxy-3-keto-5-methylthiopentenyl-1-phosphate phosphatase (219 aa).

The protein belongs to the HAD-like hydrolase superfamily. MtnX family.

The enzyme catalyses 2-hydroxy-5-methylsulfanyl-3-oxopent-1-enyl phosphate + H2O = 1,2-dihydroxy-5-(methylsulfanyl)pent-1-en-3-one + phosphate. It participates in amino-acid biosynthesis; L-methionine biosynthesis via salvage pathway; L-methionine from S-methyl-5-thio-alpha-D-ribose 1-phosphate: step 4/6. Dephosphorylates 2-hydroxy-3-keto-5-methylthiopentenyl-1-phosphate (HK-MTPenyl-1-P) yielding 1,2-dihydroxy-3-keto-5-methylthiopentene (DHK-MTPene). The chain is 2-hydroxy-3-keto-5-methylthiopentenyl-1-phosphate phosphatase from Bacillus cereus (strain ATCC 14579 / DSM 31 / CCUG 7414 / JCM 2152 / NBRC 15305 / NCIMB 9373 / NCTC 2599 / NRRL B-3711).